Consider the following 748-residue polypeptide: Polyribonucleotide nucleotidyltransferase (748 aa).

Residues Asp484 and Asp490 each contribute to the Mg(2+) site. The KH domain occupies 551-610 (PRIETMSVPKDKIRDVIGTGGKVIREIVATTGAKVDIEDDGTVRLSSSDPANIEAAREWI). The 69-residue stretch at 620 to 688 (GKIYNGKVVN…NRGKVRLSMR (69 aa)) folds into the S1 motif domain. The disordered stretch occupies residues 693–748 (ETGAELDDNRPPRENAERRGGERPRRDRGPRRESGDRPARRDMEPEFAPAFLRKDS). A compositionally biased stretch (basic and acidic residues) spans 699 to 736 (DDNRPPRENAERRGGERPRRDRGPRRESGDRPARRDME).

Belongs to the polyribonucleotide nucleotidyltransferase family. Mg(2+) is required as a cofactor.

It is found in the cytoplasm. It catalyses the reaction RNA(n+1) + phosphate = RNA(n) + a ribonucleoside 5'-diphosphate. Functionally, involved in mRNA degradation. Catalyzes the phosphorolysis of single-stranded polyribonucleotides processively in the 3'- to 5'-direction. The protein is Polyribonucleotide nucleotidyltransferase of Zymomonas mobilis subsp. mobilis (strain ATCC 31821 / ZM4 / CP4).